A 470-amino-acid chain; its full sequence is Aspartate-semialdehyde dehydrogenase 1 (470 aa).

NAD(+) contacts are provided by Thr-145 and Lys-171. Residue Asp-243 is part of the active site. Residue Gly-245 coordinates NAD(+). Cys-277 is an active-site residue. Residue Glu-371 coordinates NAD(+).

The protein belongs to the aldehyde dehydrogenase family.

The catalysed reaction is L-aspartate 4-semialdehyde + NAD(+) + H2O = L-aspartate + NADH + 2 H(+). Its function is as follows. Dehydrogenase involved in the degradation of canavanine, the delta-oxa-analog of arginine, allowing growth on canavanine as sole nitrogen and carbon source. Probably catalyzes the NAD(+)-dependent oxidation of L-aspartate-semialdehyde to L-aspartate. The sequence is that of Aspartate-semialdehyde dehydrogenase 1 from Pseudomonas canavaninivorans.